The chain runs to 44 residues: Photosystem I reaction center subunit IX (44 aa).

A helical transmembrane segment spans residues 7–27; sequence YLSVAPVLATLWFGSLAGLLI.

This sequence belongs to the PsaJ family.

It is found in the plastid. Its subcellular location is the chloroplast thylakoid membrane. May help in the organization of the PsaE and PsaF subunits. The protein is Photosystem I reaction center subunit IX of Piper cenocladum (Ant piper).